Here is a 667-residue protein sequence, read N- to C-terminus: DNA ligase (667 aa).

Residues 34–38, 83–84, and E113 contribute to the NAD(+) site; these read DAEYD and SL. K115 (N6-AMP-lysine intermediate) is an active-site residue. The NAD(+) site is built by R136, E170, K286, and K310. The Zn(2+) site is built by C404, C407, C422, and C427. Positions 589-667 constitute a BRCT domain; the sequence is ATDSVLSGKT…EQQLEDVVGK (79 aa).

The protein belongs to the NAD-dependent DNA ligase family. LigA subfamily. The cofactor is Mg(2+). It depends on Mn(2+) as a cofactor.

The catalysed reaction is NAD(+) + (deoxyribonucleotide)n-3'-hydroxyl + 5'-phospho-(deoxyribonucleotide)m = (deoxyribonucleotide)n+m + AMP + beta-nicotinamide D-nucleotide.. In terms of biological role, DNA ligase that catalyzes the formation of phosphodiester linkages between 5'-phosphoryl and 3'-hydroxyl groups in double-stranded DNA using NAD as a coenzyme and as the energy source for the reaction. It is essential for DNA replication and repair of damaged DNA. The chain is DNA ligase from Oceanobacillus iheyensis (strain DSM 14371 / CIP 107618 / JCM 11309 / KCTC 3954 / HTE831).